The sequence spans 411 residues: LL-diaminopimelate aminotransferase 1 (411 aa).

Positions 15 and 42 each coordinate substrate. Pyridoxal 5'-phosphate contacts are provided by residues Tyr72, 108 to 109 (SK), Tyr132, Asn187, Tyr218, and 246 to 248 (SFS). 3 residues coordinate substrate: Lys109, Tyr132, and Asn187. Lys249 carries the N6-(pyridoxal phosphate)lysine modification. Residues Arg257 and Asn292 each contribute to the pyridoxal 5'-phosphate site. Residues Asn292 and Arg388 each contribute to the substrate site.

Belongs to the class-I pyridoxal-phosphate-dependent aminotransferase family. LL-diaminopimelate aminotransferase subfamily. As to quaternary structure, homodimer. Requires pyridoxal 5'-phosphate as cofactor.

It catalyses the reaction (2S,6S)-2,6-diaminopimelate + 2-oxoglutarate = (S)-2,3,4,5-tetrahydrodipicolinate + L-glutamate + H2O + H(+). Its pathway is amino-acid biosynthesis; L-lysine biosynthesis via DAP pathway; LL-2,6-diaminopimelate from (S)-tetrahydrodipicolinate (aminotransferase route): step 1/1. Functionally, involved in the synthesis of meso-diaminopimelate (m-DAP or DL-DAP), required for both lysine and peptidoglycan biosynthesis. Catalyzes the direct conversion of tetrahydrodipicolinate to LL-diaminopimelate. This chain is LL-diaminopimelate aminotransferase 1, found in Nostoc sp. (strain PCC 7120 / SAG 25.82 / UTEX 2576).